Here is a 92-residue protein sequence, read N- to C-terminus: Large ribosomal subunit protein bL25 (92 aa).

The protein belongs to the bacterial ribosomal protein bL25 family. In terms of assembly, part of the 50S ribosomal subunit; part of the 5S rRNA/L5/L18/L25 subcomplex. Contacts the 5S rRNA. Binds to the 5S rRNA independently of L5 and L18.

In terms of biological role, this is one of the proteins that binds to the 5S RNA in the ribosome where it forms part of the central protuberance. This chain is Large ribosomal subunit protein bL25, found in Vibrio cholerae serotype O1 (strain ATCC 39541 / Classical Ogawa 395 / O395).